Reading from the N-terminus, the 486-residue chain is MTNRIKSSNTLLTFDANEVTNIKLVWDIEELKNKDNKENKDKENKAHIKDEGEEEEQKEKKEEEEKEDDGGPISFHPTYSHQIFNEDKIQGYEPCKIDIYMGAGSLTSYIDTNYTLQSKNLTNVEGEFLKVFSKQDPPISKQSFYKYIEEKEKLFKPIGKKIHEYSIIDKESGKETEYEIYFGRITDQVVFRYHEKLQIFVLWYIDGSSYIWTDDPNWDIFFIFEKRIIDGEKRYGITGYSTIYNFYHHPEQTRARISQYLILPPYQRMGHGKYLFNSIYQYYKTNDGFYGPIYDITIEDPADEFNLLRNYVDLKNIMDEKLFDNVILDLNANNKSVFEEIRKKLLIPYKQSKLCLEIYLFSKFLGTPNSDTKYKEYRISIKKRLYKQNIGDSEQIEKIKQQVAEENQENLRLEQEELQELQDIENKKNGTNIKVDIKPKELTTPPGPEKNKEEIEKDRLEEILELYKELEKNYHKTLSSLNLISK.

Positions 27-69 (DIEELKNKDNKENKDKENKAHIKDEGEEEEQKEKKEEEEKEDD) form a coiled coil. The span at 33–50 (NKDNKENKDKENKAHIKD) shows a compositional bias: basic and acidic residues. The disordered stretch occupies residues 33-78 (NKDNKENKDKENKAHIKDEGEEEEQKEKKEEEEKEDDGGPISFHPT). One can recognise an N-acetyltransferase domain in the interval 189-386 (VVFRYHEKLQ…YRISIKKRLY (198 aa)). Acetyl-CoA contacts are provided by residues 260-262 (YLI) and 267-273 (QRMGHGK). Residue E299 is the Proton donor/acceptor of the active site. The stretch at 392-481 (DSEQIEKIKQ…KNYHKTLSSL (90 aa)) forms a coiled coil.

It belongs to the HAT1 family.

It carries out the reaction L-lysyl-[protein] + acetyl-CoA = N(6)-acetyl-L-lysyl-[protein] + CoA + H(+). The chain is Histone acetyltransferase type B catalytic subunit DDB_G0274269 from Dictyostelium discoideum (Social amoeba).